The primary structure comprises 891 residues: Probable serine/threonine-protein kinase mkcC (891 aa).

Disordered stretches follow at residues 24 to 70, 85 to 121, 264 to 435, 495 to 526, and 565 to 588; these read IELN…TATI, ANNNTNQLNKSTSSSSSLNNNKNEDNKSVTASIAPSS, DDPQ…AREK, NSLGSSINKNNSNNTTTTTTTTNTNNKSPEVS, and TTASQSSQAPYHPSHNGNEEDDYD. Positions 29-41 are enriched in low complexity; the sequence is QEEQQQPEQQEQP. A compositionally biased stretch (basic and acidic residues) spans 45 to 58; that stretch reads EELKDNNEKIKTSE. Composition is skewed to low complexity over residues 61 to 70, 86 to 105, 297 to 314, 322 to 360, and 379 to 397; these read TTTTTTTATI, NNNTNQLNKSTSSSSSLNNN, STSNTTGKNTGKNSTTGK, SNSSNVPPSPVLASSASPSPKLKSSSSSIRNSGAISGTS, and TTGNSTTTTTTTTSTTTSS. Residues 422–432 are compositionally biased toward basic residues; it reads RKRKEQKRSRA. The segment covering 495 to 522 has biased composition (low complexity); the sequence is NSLGSSINKNNSNNTTTTTTTTNTNNKS. The Protein kinase domain maps to 616-864; it reads YKNLKQIGSG…AEQLLKHPWI (249 aa). ATP-binding positions include 622–630 and Lys645; that span reads IGSGGFGSV. Asp735 functions as the Proton acceptor in the catalytic mechanism.

Belongs to the protein kinase superfamily. STE Ser/Thr protein kinase family. STE20 subfamily. The cofactor is Mg(2+).

The enzyme catalyses L-seryl-[protein] + ATP = O-phospho-L-seryl-[protein] + ADP + H(+). It catalyses the reaction L-threonyl-[protein] + ATP = O-phospho-L-threonyl-[protein] + ADP + H(+). The sequence is that of Probable serine/threonine-protein kinase mkcC from Dictyostelium discoideum (Social amoeba).